A 303-amino-acid chain; its full sequence is Nucleotide-binding protein Acry_0446 (303 aa).

10-17 provides a ligand contact to ATP; sequence GLSGAGRN. 54-57 provides a ligand contact to GTP; sequence DART.

The protein belongs to the RapZ-like family.

Functionally, displays ATPase and GTPase activities. This is Nucleotide-binding protein Acry_0446 from Acidiphilium cryptum (strain JF-5).